Consider the following 236-residue polypeptide: Purine nucleoside phosphorylase DeoD-type 2 (236 aa).

An a purine D-ribonucleoside-binding site is contributed by His5. Phosphate is bound by residues Gly21, Arg25, Arg44, and 88-91; that span reads RVGS. Residues 180–182 and 204–205 each bind a purine D-ribonucleoside; these read DME and SD. The active-site Proton donor is Asp205.

It belongs to the PNP/UDP phosphorylase family. In terms of assembly, homohexamer; trimer of homodimers.

It catalyses the reaction a purine D-ribonucleoside + phosphate = a purine nucleobase + alpha-D-ribose 1-phosphate. The enzyme catalyses a purine 2'-deoxy-D-ribonucleoside + phosphate = a purine nucleobase + 2-deoxy-alpha-D-ribose 1-phosphate. In terms of biological role, catalyzes the reversible phosphorolytic breakdown of the N-glycosidic bond in the beta-(deoxy)ribonucleoside molecules, with the formation of the corresponding free purine bases and pentose-1-phosphate. This chain is Purine nucleoside phosphorylase DeoD-type 2, found in Vibrio vulnificus (strain CMCP6).